Consider the following 75-residue polypeptide: Large ribosomal subunit protein bL31 (75 aa).

It belongs to the bacterial ribosomal protein bL31 family. Type A subfamily. Part of the 50S ribosomal subunit.

Binds the 23S rRNA. In Bradyrhizobium sp. (strain BTAi1 / ATCC BAA-1182), this protein is Large ribosomal subunit protein bL31.